Consider the following 513-residue polypeptide: MVQVFRTIAGLQTYLRQAGRGKTVGLVPTMGSLHAGHGSLLKRAVAEMDLVVLSIFVNPLQFGPGEDLEKYPRDFDGDRQWAESLGVAVIFAPTVTDLGIDAKGDQTTVLPPPAMTEVLCGAHRPGHFQGVATIVTKLFTIVCPDVAYFGAKDAQQLAIIRRLVQDLNLTVTIRSCATVREESGLAMSSRNQYLSPIEKEQATVLYRSLQAAQQRYRQGDRQVSALLTATQDVLDAEPSVQVQYLQLVEADTLQPITGTLPDQNPVLMAIAAYVGSTRLIDNLVLNHRLPIIAIDGPAGAGKSTVTRQVADGLGLTYLDTGAMYRALAWLILDQGIAPEDEPAVAELTSGAEIELMPRPAPQLTGVKVNGQDVSDAIRTPAVTQLVSTIAAQGAVRAKLLKLQRKYGDQGGIVAEGRDIGTQVFPNAELKIFLTASVQERARRRLKDFEAQGNQAVDLAQLEADIAHRDHLDSTRAIAPLQKAVDAVEIITDNLTIAEVVETIIELYKKYNKG.

The tract at residues Met-1–Leu-283 is pantoate--beta-alanine ligase. ATP is bound at residue Met-30–His-37. The active-site Proton donor is the His-37. Gln-61 contacts (R)-pantoate. Gln-61 contacts beta-alanine. Gly-150–Asp-153 contributes to the ATP binding site. Gln-156 contributes to the (R)-pantoate binding site. ATP-binding positions include Val-179 and Met-187–Arg-190. Residues Val-284 to Gly-513 form a cytidylate kinase region.

In the N-terminal section; belongs to the pantothenate synthetase family. The protein in the C-terminal section; belongs to the cytidylate kinase family. Type 1 subfamily.

The protein localises to the cytoplasm. It carries out the reaction (R)-pantoate + beta-alanine + ATP = (R)-pantothenate + AMP + diphosphate + H(+). The enzyme catalyses CMP + ATP = CDP + ADP. The catalysed reaction is dCMP + ATP = dCDP + ADP. It participates in cofactor biosynthesis; (R)-pantothenate biosynthesis; (R)-pantothenate from (R)-pantoate and beta-alanine: step 1/1. In terms of biological role, catalyzes the condensation of pantoate with beta-alanine in an ATP-dependent reaction via a pantoyl-adenylate intermediate. Its function is as follows. Catalyzes the transfer of a phosphate group from ATP to either CMP or dCMP to form CDP or dCDP and ADP, respectively. The polypeptide is Bifunctional pantoate ligase/cytidylate kinase (Synechocystis sp. (strain ATCC 27184 / PCC 6803 / Kazusa)).